A 500-amino-acid polypeptide reads, in one-letter code: NAD(P)H-quinone oxidoreductase chain 4, chloroplastic (500 aa).

14 helical membrane-spanning segments follow: residues 4–24, 35–55, 87–107, 113–130, 134–154, 167–187, 208–228, 242–262, 272–292, 305–325, 330–350, 386–406, 411–431, and 462–482; these read FPWL…IFFL, YTIC…CYHF, IGPI…AWPI, LFHF…GSFS, LLLF…LLCM, FILY…GVAL, VLEI…SPII, HYST…YGLI, AHSI…IYAA, IAYS…SLTD, GALL…FLAG, LALP…GIIT, LLIP…LTPI, and LFLS…PDFV.

It belongs to the complex I subunit 4 family.

It is found in the plastid. Its subcellular location is the chloroplast thylakoid membrane. It catalyses the reaction a plastoquinone + NADH + (n+1) H(+)(in) = a plastoquinol + NAD(+) + n H(+)(out). It carries out the reaction a plastoquinone + NADPH + (n+1) H(+)(in) = a plastoquinol + NADP(+) + n H(+)(out). This Nicotiana tomentosiformis (Tobacco) protein is NAD(P)H-quinone oxidoreductase chain 4, chloroplastic.